A 64-amino-acid chain; its full sequence is Basic secretory protease (64 aa).

The cofactor is a divalent metal cation. Post-translationally, glycosylated.

Its activity is regulated as follows. Inhibited by EDTA. Metalloprotease, digests gelatin and azocasein (in vitro). The chain is Basic secretory protease from Boswellia serrata (Indian frankincense).